The following is a 224-amino-acid chain: UPF0758 protein Hhal_2301 (224 aa).

An MPN domain is found at 102 to 224 (TLSSPAQTRT…PVSLAERGVL (123 aa)). Zn(2+)-binding residues include histidine 173, histidine 175, and aspartate 186. A JAMM motif motif is present at residues 173–186 (HNHPSGITEPSAAD).

The protein belongs to the UPF0758 family.

The polypeptide is UPF0758 protein Hhal_2301 (Halorhodospira halophila (strain DSM 244 / SL1) (Ectothiorhodospira halophila (strain DSM 244 / SL1))).